Consider the following 209-residue polypeptide: Molybdenum cofactor guanylyltransferase (209 aa).

GTP contacts are provided by residues 13 to 15, lysine 26, asparagine 54, aspartate 74, and aspartate 104; that span reads LAG. Residue aspartate 104 participates in Mg(2+) binding.

It belongs to the MobA family. As to quaternary structure, monomer. Mg(2+) is required as a cofactor.

The protein localises to the cytoplasm. The enzyme catalyses Mo-molybdopterin + GTP + H(+) = Mo-molybdopterin guanine dinucleotide + diphosphate. In terms of biological role, transfers a GMP moiety from GTP to Mo-molybdopterin (Mo-MPT) cofactor (Moco or molybdenum cofactor) to form Mo-molybdopterin guanine dinucleotide (Mo-MGD) cofactor. The protein is Molybdenum cofactor guanylyltransferase of Acinetobacter baumannii (strain ATCC 17978 / DSM 105126 / CIP 53.77 / LMG 1025 / NCDC KC755 / 5377).